We begin with the raw amino-acid sequence, 314 residues long: Protein REGULATOR OF FATTY ACID COMPOSITION 3, chloroplastic (314 aa).

Residues 1–47 (MESLLHASSSLVSLRPRIDGRDSFINPSRVCLNPSLGRRGSKPLPLV) constitute a chloroplast transit peptide. Disordered stretches follow at residues 49–73 (AAKK…ATGP) and 214–314 (AITE…NVGG). Positions 56–69 (KKDDNHNFSARPDE) are enriched in basic and acidic residues. 2 stretches are compositionally biased toward acidic residues: residues 233–269 (EYYD…DDDG) and 277–294 (GDEE…EQEE). A compositionally biased stretch (basic and acidic residues) spans 295–308 (GQDKSTNGRRETRR).

Belongs to the bacterial ribosomal protein bS6 family. Interacts with CFM3B/SPRT2 in plastids. Expressed ubiquitously in roots, leaves, stems, flower buds, flowers and siliques.

It is found in the plastid. Its subcellular location is the chloroplast. Functionally, prevents non-specific action of the splicing factor CFM3b during plastid rRNA biogenesis to improve the accuracy of plastid rRNA processing. Required for plastid functions such as photosynthesis, intracellular distribution, plastid rRNAs biosynthesis and plastid gene expression in roots. Involved in a sucrose-conditional process important for the organization of root lateral and apical meristems (e.g. establishment of RAM from pericycle and symplasmic connectivity), and subsequent primary and lateral roots development. Modulates C18 unsaturated fatty acid metabolism. The polypeptide is Protein REGULATOR OF FATTY ACID COMPOSITION 3, chloroplastic (Arabidopsis thaliana (Mouse-ear cress)).